The primary structure comprises 336 residues: Fructose-1,6-bisphosphatase class 1 (336 aa).

Residues E90, D112, L114, and D115 each coordinate Mg(2+). Substrate-binding positions include 115-118 (DGSS), N211, and K277. E283 provides a ligand contact to Mg(2+).

Belongs to the FBPase class 1 family. As to quaternary structure, homotetramer. It depends on Mg(2+) as a cofactor.

It is found in the cytoplasm. The enzyme catalyses beta-D-fructose 1,6-bisphosphate + H2O = beta-D-fructose 6-phosphate + phosphate. It participates in carbohydrate biosynthesis; gluconeogenesis. The polypeptide is Fructose-1,6-bisphosphatase class 1 (Pseudomonas syringae pv. syringae (strain B728a)).